The sequence spans 516 residues: Tyrosine decarboxylase 3 (516 aa).

Residue lysine 319 is modified to N6-(pyridoxal phosphate)lysine.

It belongs to the group II decarboxylase family. As to quaternary structure, homodimer. The cofactor is pyridoxal 5'-phosphate.

It catalyses the reaction L-tyrosine + H(+) = tyramine + CO2. In Petroselinum crispum (Parsley), this protein is Tyrosine decarboxylase 3 (TYRDC-3).